Here is a 124-residue protein sequence, read N- to C-terminus: Fluoride-specific ion channel FluC 2 (124 aa).

4 helical membrane-spanning segments follow: residues 1–21 (MSDI…RFQI), 34–54 (FLIL…LSLV), 66–86 (LILF…SFVY), and 103–123 (LFII…FLGT). Na(+) contacts are provided by G76 and S79.

It belongs to the fluoride channel Fluc/FEX (TC 1.A.43) family.

It localises to the cell inner membrane. It carries out the reaction fluoride(in) = fluoride(out). Its activity is regulated as follows. Na(+) is not transported, but it plays an essential structural role and its presence is essential for fluoride channel function. In terms of biological role, fluoride-specific ion channel. Important for reducing fluoride concentration in the cell, thus reducing its toxicity. The protein is Fluoride-specific ion channel FluC 2 of Prochlorococcus marinus (strain NATL2A).